The sequence spans 353 residues: MRHISSLLQGLARSLSVGKERKGGDGDDGKAAAATATAVLRTSGTLWGEGSETFAAVCSRRGEKGINQDCSIVCEGFGCEEGSVLCGIFDGHGQWGHYVAKAVRESLPPALLRRWREAVTLAALIDGGEKRLCECRPDLWRQSYLAACAAVDAELRASRRLDAVHSGCTALSLVKHGDLLVVANVGDSRAVLATASPDDGGGARLAAVQLTVDFKPNLPQERERIMECNGRVQCLADEPGVHRVWRPDREGPGLAMSRAFGDYCVKDYGVISAPEVTHRRITAQDHFVILATDGVWDVVSNEEAVQIVASAPEREKAAKRLVEFAVRAWRRKRRGIAVDDCSAICLFFHSPPS.

The PPM-type phosphatase domain occupies 54–348 (FAAVCSRRGE…DDCSAICLFF (295 aa)). Mn(2+) is bound by residues Asp-90, Gly-91, Asp-293, and Asp-339.

This sequence belongs to the PP2C family. It depends on Mg(2+) as a cofactor. The cofactor is Mn(2+).

It carries out the reaction O-phospho-L-seryl-[protein] + H2O = L-seryl-[protein] + phosphate. It catalyses the reaction O-phospho-L-threonyl-[protein] + H2O = L-threonyl-[protein] + phosphate. This Oryza sativa subsp. japonica (Rice) protein is Probable protein phosphatase 2C 48.